We begin with the raw amino-acid sequence, 238 residues long: Probable transcriptional regulatory protein HH_1604 (238 aa).

Belongs to the TACO1 family.

It is found in the cytoplasm. The polypeptide is Probable transcriptional regulatory protein HH_1604 (Helicobacter hepaticus (strain ATCC 51449 / 3B1)).